We begin with the raw amino-acid sequence, 266 residues long: 3-methyl-2-oxobutanoate hydroxymethyltransferase (266 aa).

2 residues coordinate Mg(2+): Asp-45 and Asp-84. Residues 45–46, Asp-84, and Lys-112 contribute to the 3-methyl-2-oxobutanoate site; that span reads DS. Residue Glu-114 participates in Mg(2+) binding. Catalysis depends on Glu-181, which acts as the Proton acceptor.

Belongs to the PanB family. In terms of assembly, homodecamer; pentamer of dimers. Mg(2+) is required as a cofactor.

The protein localises to the cytoplasm. The catalysed reaction is 3-methyl-2-oxobutanoate + (6R)-5,10-methylene-5,6,7,8-tetrahydrofolate + H2O = 2-dehydropantoate + (6S)-5,6,7,8-tetrahydrofolate. Its pathway is cofactor biosynthesis; (R)-pantothenate biosynthesis; (R)-pantoate from 3-methyl-2-oxobutanoate: step 1/2. Its function is as follows. Catalyzes the reversible reaction in which hydroxymethyl group from 5,10-methylenetetrahydrofolate is transferred onto alpha-ketoisovalerate to form ketopantoate. This Pseudomonas fluorescens (strain Pf0-1) protein is 3-methyl-2-oxobutanoate hydroxymethyltransferase.